The following is a 338-amino-acid chain: Fructose-1,6-bisphosphatase class 1 (338 aa).

Glu-94, Asp-116, Leu-118, and Asp-119 together coordinate Mg(2+). Residues 119–122, Asn-210, and Lys-276 contribute to the substrate site; that span reads DGSS. Glu-282 contributes to the Mg(2+) binding site.

This sequence belongs to the FBPase class 1 family. Homotetramer. Mg(2+) is required as a cofactor.

It is found in the cytoplasm. The enzyme catalyses beta-D-fructose 1,6-bisphosphate + H2O = beta-D-fructose 6-phosphate + phosphate. Its pathway is carbohydrate biosynthesis; gluconeogenesis. This Paraburkholderia phytofirmans (strain DSM 17436 / LMG 22146 / PsJN) (Burkholderia phytofirmans) protein is Fructose-1,6-bisphosphatase class 1.